Consider the following 459-residue polypeptide: Methylenetetrahydrofolate--tRNA-(uracil-5-)-methyltransferase TrmFO (459 aa).

26 to 31 serves as a coordination point for FAD; sequence GGGLAG.

It belongs to the MnmG family. TrmFO subfamily. Requires FAD as cofactor.

The protein resides in the cytoplasm. The enzyme catalyses uridine(54) in tRNA + (6R)-5,10-methylene-5,6,7,8-tetrahydrofolate + NADH + H(+) = 5-methyluridine(54) in tRNA + (6S)-5,6,7,8-tetrahydrofolate + NAD(+). The catalysed reaction is uridine(54) in tRNA + (6R)-5,10-methylene-5,6,7,8-tetrahydrofolate + NADPH + H(+) = 5-methyluridine(54) in tRNA + (6S)-5,6,7,8-tetrahydrofolate + NADP(+). Its function is as follows. Catalyzes the folate-dependent formation of 5-methyl-uridine at position 54 (M-5-U54) in all tRNAs. The protein is Methylenetetrahydrofolate--tRNA-(uracil-5-)-methyltransferase TrmFO of Synechococcus sp. (strain JA-2-3B'a(2-13)) (Cyanobacteria bacterium Yellowstone B-Prime).